Here is a 354-residue protein sequence, read N- to C-terminus: tRNA N6-adenosine threonylcarbamoyltransferase (354 aa).

H111 and H115 together coordinate Fe cation. Substrate contacts are provided by residues 134–138 (LVSGG), D167, G180, and N279. Position 319 (D319) interacts with Fe cation.

This sequence belongs to the KAE1 / TsaD family. The cofactor is Fe(2+).

Its subcellular location is the cytoplasm. The catalysed reaction is L-threonylcarbamoyladenylate + adenosine(37) in tRNA = N(6)-L-threonylcarbamoyladenosine(37) in tRNA + AMP + H(+). Functionally, required for the formation of a threonylcarbamoyl group on adenosine at position 37 (t(6)A37) in tRNAs that read codons beginning with adenine. Is involved in the transfer of the threonylcarbamoyl moiety of threonylcarbamoyl-AMP (TC-AMP) to the N6 group of A37, together with TsaE and TsaB. TsaD likely plays a direct catalytic role in this reaction. The protein is tRNA N6-adenosine threonylcarbamoyltransferase of Neisseria meningitidis serogroup B (strain ATCC BAA-335 / MC58).